Consider the following 733-residue polypeptide: Phosphoribosylformylglycinamidine synthase subunit PurL (733 aa).

Histidine 42 is a catalytic residue. ATP is bound by residues tyrosine 45 and lysine 84. Glutamate 86 lines the Mg(2+) pocket. Substrate contacts are provided by residues 87-90 (SHNH) and arginine 109. Histidine 88 acts as the Proton acceptor in catalysis. Aspartate 110 serves as a coordination point for Mg(2+). Residue glutamine 233 participates in substrate binding. Aspartate 261 contacts Mg(2+). Position 305–307 (305–307 (ESQ)) interacts with substrate. Aspartate 489 and glycine 526 together coordinate ATP. Mg(2+) is bound at residue asparagine 527. Serine 529 provides a ligand contact to substrate.

The protein belongs to the FGAMS family. Monomer. Part of the FGAM synthase complex composed of 1 PurL, 1 PurQ and 2 PurS subunits.

Its subcellular location is the cytoplasm. The catalysed reaction is N(2)-formyl-N(1)-(5-phospho-beta-D-ribosyl)glycinamide + L-glutamine + ATP + H2O = 2-formamido-N(1)-(5-O-phospho-beta-D-ribosyl)acetamidine + L-glutamate + ADP + phosphate + H(+). It functions in the pathway purine metabolism; IMP biosynthesis via de novo pathway; 5-amino-1-(5-phospho-D-ribosyl)imidazole from N(2)-formyl-N(1)-(5-phospho-D-ribosyl)glycinamide: step 1/2. In terms of biological role, part of the phosphoribosylformylglycinamidine synthase complex involved in the purines biosynthetic pathway. Catalyzes the ATP-dependent conversion of formylglycinamide ribonucleotide (FGAR) and glutamine to yield formylglycinamidine ribonucleotide (FGAM) and glutamate. The FGAM synthase complex is composed of three subunits. PurQ produces an ammonia molecule by converting glutamine to glutamate. PurL transfers the ammonia molecule to FGAR to form FGAM in an ATP-dependent manner. PurS interacts with PurQ and PurL and is thought to assist in the transfer of the ammonia molecule from PurQ to PurL. The sequence is that of Phosphoribosylformylglycinamidine synthase subunit PurL from Moorella thermoacetica (strain ATCC 39073 / JCM 9320).